Consider the following 392-residue polypeptide: Erythronate-4-phosphate dehydrogenase (392 aa).

Substrate is bound by residues Ser48 and Thr69. Asp149 provides a ligand contact to NAD(+). Arg215 is an active-site residue. Asp239 contacts NAD(+). Residue Glu244 is part of the active site. The active-site Proton donor is the His261. Gly264 contributes to the NAD(+) binding site. Tyr265 lines the substrate pocket.

The protein belongs to the D-isomer specific 2-hydroxyacid dehydrogenase family. PdxB subfamily. In terms of assembly, homodimer.

Its subcellular location is the cytoplasm. It catalyses the reaction 4-phospho-D-erythronate + NAD(+) = (R)-3-hydroxy-2-oxo-4-phosphooxybutanoate + NADH + H(+). The protein operates within cofactor biosynthesis; pyridoxine 5'-phosphate biosynthesis; pyridoxine 5'-phosphate from D-erythrose 4-phosphate: step 2/5. Its function is as follows. Catalyzes the oxidation of erythronate-4-phosphate to 3-hydroxy-2-oxo-4-phosphonooxybutanoate. The protein is Erythronate-4-phosphate dehydrogenase of Salinibacter ruber (strain DSM 13855 / M31).